The sequence spans 118 residues: Holo-[acyl-carrier-protein] synthase (118 aa).

Mg(2+) contacts are provided by Asp-8 and Glu-58.

This sequence belongs to the P-Pant transferase superfamily. AcpS family. Requires Mg(2+) as cofactor.

It is found in the cytoplasm. The enzyme catalyses apo-[ACP] + CoA = holo-[ACP] + adenosine 3',5'-bisphosphate + H(+). Its function is as follows. Transfers the 4'-phosphopantetheine moiety from coenzyme A to a Ser of acyl-carrier-protein. This Listeria welshimeri serovar 6b (strain ATCC 35897 / DSM 20650 / CCUG 15529 / CIP 8149 / NCTC 11857 / SLCC 5334 / V8) protein is Holo-[acyl-carrier-protein] synthase.